A 68-amino-acid chain; its full sequence is Ribosome modulation factor (68 aa).

The protein belongs to the ribosome modulation factor family.

It is found in the cytoplasm. Functionally, during stationary phase, converts 70S ribosomes to an inactive dimeric form (100S ribosomes). This Saccharophagus degradans (strain 2-40 / ATCC 43961 / DSM 17024) protein is Ribosome modulation factor.